The following is a 138-amino-acid chain: uncharacterized protein (138 aa).

3 consecutive transmembrane segments (helical) span residues 17–37 (LIVS…TVFF), 43–63 (INLI…LLVC), and 117–137 (FWWM…VVSL).

The protein localises to the cell membrane. This is an uncharacterized protein from Mycoplasma pneumoniae (strain ATCC 29342 / M129 / Subtype 1) (Mycoplasmoides pneumoniae).